A 507-amino-acid polypeptide reads, in one-letter code: MATIRADEISNIIRERIEQYNREVKIVNTGTVLQVGDGIARIYGLDEVMAGELVEFEEGTIGIALNLESKNVGVVLMGDGLLIQEGSSVKATGRIAQIPVSEAYLGRVINALAKPIDGRGEISSSESRLIESPAPGIISRRSVYEPLQTGLIAIDAMIPIGRGQRELIIGDRQTGKTAVATDTILNQQGNNVICVYVAIGQKASSVAQVVNALQERGAMEYTIVVAEAADSPATLQYLAPYTGAALAEYFMYRERHTLIIYDDPSKQAQAYRQMSLLLRRPPGREAYPGDVFYLHSRLLERAAKLSSRLGEGSMTALPIVETQSGDVSAYIPTNVISITDGQIFLSADLFNAGIRPAINVGISVSRVGSAAQIKAMKQVAGKLKLELAQFAELEAFAQFSSDLDKATQNQLARGQRLRELLKQSQAKPLTVAEQILTIYTGTNGYLDSFEIAQVRKFLDELRDYVKTRKPQFEEIISSTKIFTEEAQALLKDAIQEQKELFLVQEKV.

An ATP-binding site is contributed by 170-177; it reads GDRQTGKT.

It belongs to the ATPase alpha/beta chains family. As to quaternary structure, F-type ATPases have 2 components, CF(1) - the catalytic core - and CF(0) - the membrane proton channel. CF(1) has five subunits: alpha(3), beta(3), gamma(1), delta(1), epsilon(1). CF(0) has four main subunits: a, b, b' and c.

Its subcellular location is the plastid. It localises to the chloroplast thylakoid membrane. It catalyses the reaction ATP + H2O + 4 H(+)(in) = ADP + phosphate + 5 H(+)(out). Its function is as follows. Produces ATP from ADP in the presence of a proton gradient across the membrane. The alpha chain is a regulatory subunit. The polypeptide is ATP synthase subunit alpha, chloroplastic (Oenothera glazioviana (Large-flowered evening primrose)).